Reading from the N-terminus, the 251-residue chain is Probable-ribose 5-phosphate isomerase (251 aa).

The protein belongs to the ribose 5-phosphate isomerase family.

The catalysed reaction is aldehydo-D-ribose 5-phosphate = D-ribulose 5-phosphate. Its pathway is carbohydrate degradation; pentose phosphate pathway; D-ribose 5-phosphate from D-ribulose 5-phosphate (non-oxidative stage): step 1/1. The sequence is that of Probable-ribose 5-phosphate isomerase (rpia-1) from Caenorhabditis elegans.